The primary structure comprises 103 residues: N(4)-acetylcytidine amidohydrolase (103 aa).

Residues Ile6–Phe100 form the ASCH domain. Residue Lys21 is the Proton acceptor of the active site. Thr24 serves as the catalytic Nucleophile. The active-site Proton donor is Glu74.

Belongs to the N(4)-acetylcytidine amidohydrolase family.

It catalyses the reaction N(4)-acetylcytidine + H2O = cytidine + acetate + H(+). The catalysed reaction is N(4)-acetyl-2'-deoxycytidine + H2O = 2'-deoxycytidine + acetate + H(+). It carries out the reaction N(4)-acetylcytosine + H2O = cytosine + acetate + H(+). Its function is as follows. Catalyzes the hydrolysis of N(4)-acetylcytidine (ac4C). This Salmonella arizonae (strain ATCC BAA-731 / CDC346-86 / RSK2980) protein is N(4)-acetylcytidine amidohydrolase (yqfB).